The chain runs to 204 residues: Probable dTDP-4-oxo-2,6-dideoxy-D-glucose 3,5-epimerase (204 aa).

Residues Arg21, Glu26, 45-47 (QAN), Lys70, and His117 each bind substrate. The active-site Proton donor is Tyr130. A substrate-binding site is contributed by Glu141. The segment at 164 to 204 (VGEGTPTHRPWRRPRRPGILPDYEGVPGALHRGGGRRGTGP) is disordered.

This sequence belongs to the dTDP-4-dehydrorhamnose 3,5-epimerase family.

Its pathway is antibiotic biosynthesis. Involved in the biosynthesis of one of the two 2,6-deoxysugars, dTDP-L-oleandrose, attached to the macrolactone ring oleandolide to produce the aglycone antibiotic oleandomycin. Probably catalyzes the conversion of dTDP-4-keto-2,6-dideoxy-alpha-D-glucose to dTDP-4-keto-2,6-dideoxy-beta-L-galactose. The protein is Probable dTDP-4-oxo-2,6-dideoxy-D-glucose 3,5-epimerase of Streptomyces antibioticus.